Here is a 170-residue protein sequence, read N- to C-terminus: uncharacterized protein (170 aa).

Helical transmembrane passes span 6-26 (PFYF…ILLI), 31-51 (LLFI…LIYI), and 91-111 (IYFS…IVAF).

The protein to M.jannaschii MJ1249.1, MJ0210.1 and MJ0785.1.

Its subcellular location is the cell membrane. This is an uncharacterized protein from Methanocaldococcus jannaschii (strain ATCC 43067 / DSM 2661 / JAL-1 / JCM 10045 / NBRC 100440) (Methanococcus jannaschii).